Reading from the N-terminus, the 138-residue chain is Basic phospholipase A2 PLA-B' (138 aa).

An N-terminal signal peptide occupies residues 1–16; sequence MRTLWITAVLLVGVEG. 7 disulfide bridges follow: Cys42/Cys131, Cys44/Cys60, Cys59/Cys111, Cys65/Cys138, Cys66/Cys104, Cys73/Cys97, and Cys91/Cys102. 3 residues coordinate Ca(2+): Tyr43, Gly45, and Gly47. Residue His63 is part of the active site. Asp64 is a binding site for Ca(2+). Asp105 is a catalytic residue.

The protein belongs to the phospholipase A2 family. Group II subfamily. D49 sub-subfamily. It depends on Ca(2+) as a cofactor. As to expression, expressed by the venom gland.

The protein localises to the secreted. The enzyme catalyses a 1,2-diacyl-sn-glycero-3-phosphocholine + H2O = a 1-acyl-sn-glycero-3-phosphocholine + a fatty acid + H(+). In terms of biological role, PLA2 catalyzes the calcium-dependent hydrolysis of the 2-acyl groups in 3-sn-phosphoglycerides. This is Basic phospholipase A2 PLA-B' from Protobothrops flavoviridis (Habu).